Consider the following 268-residue polypeptide: MTVPDPARPAASPSARPRVLVANDDGIFAPGIKALGLALSEWADVVVVAPDVEQSAVGHGITIRRPLRFKHTAAAGFGDIPAYRVDGTPADCVVLGVHLLGRPDLVVSGINIGPNLGEDLTHSGTVAAAIEGLTLGLPSIAFSQFANEAGEYDFGPSAAYASRLAREVCCRGLPPRVLLNVNFPRVSPRGVRVTEVGLHRWEDSVVTRQDPEGRDYHWVAGVSTAHDGHDEQTDYGAVQAGFISVSPVRLDLTARDLIGELTQALPPL.

4 residues coordinate a divalent metal cation: Asp-24, Asp-25, Ser-55, and Asn-111.

It belongs to the SurE nucleotidase family. Requires a divalent metal cation as cofactor.

It localises to the cytoplasm. The catalysed reaction is a ribonucleoside 5'-phosphate + H2O = a ribonucleoside + phosphate. Functionally, nucleotidase that shows phosphatase activity on nucleoside 5'-monophosphates. The sequence is that of 5'-nucleotidase SurE from Deinococcus radiodurans (strain ATCC 13939 / DSM 20539 / JCM 16871 / CCUG 27074 / LMG 4051 / NBRC 15346 / NCIMB 9279 / VKM B-1422 / R1).